The chain runs to 102 residues: Small ribosomal subunit protein uS10 (102 aa).

It belongs to the universal ribosomal protein uS10 family. Part of the 30S ribosomal subunit.

Involved in the binding of tRNA to the ribosomes. The chain is Small ribosomal subunit protein uS10 from Cereibacter sphaeroides (strain ATCC 17029 / ATH 2.4.9) (Rhodobacter sphaeroides).